Consider the following 237-residue polypeptide: Ribonuclease PH (237 aa).

Residues R86 and 124–126 (GTR) each bind phosphate.

The protein belongs to the RNase PH family. In terms of assembly, homohexameric ring arranged as a trimer of dimers.

The enzyme catalyses tRNA(n+1) + phosphate = tRNA(n) + a ribonucleoside 5'-diphosphate. Functionally, phosphorolytic 3'-5' exoribonuclease that plays an important role in tRNA 3'-end maturation. Removes nucleotide residues following the 3'-CCA terminus of tRNAs; can also add nucleotides to the ends of RNA molecules by using nucleoside diphosphates as substrates, but this may not be physiologically important. Probably plays a role in initiation of 16S rRNA degradation (leading to ribosome degradation) during starvation. This is Ribonuclease PH from Rhodopseudomonas palustris (strain ATCC BAA-98 / CGA009).